Here is a 154-residue protein sequence, read N- to C-terminus: Aspartate carbamoyltransferase regulatory chain (154 aa).

Zn(2+)-binding residues include Cys-109, Cys-114, Cys-138, and Cys-141.

Belongs to the PyrI family. In terms of assembly, contains catalytic and regulatory chains. Zn(2+) is required as a cofactor.

Its function is as follows. Involved in allosteric regulation of aspartate carbamoyltransferase. This is Aspartate carbamoyltransferase regulatory chain from Yersinia pseudotuberculosis serotype O:1b (strain IP 31758).